Consider the following 70-residue polypeptide: Conotoxin TxMMSK-02 (70 aa).

An N-terminal signal peptide occupies residues 1-20; the sequence is MMSKLGALLTICLLLFSLTA. Residues 21–53 constitute a propeptide that is removed on maturation; the sequence is VPLDGDQHADQPAQRLQDRIPTEDHPLFDPNKR. Cystine bridges form between C54-C68, C55-C64, and C60-C67. At P66 the chain carries 4-hydroxyproline. The residue at position 69 (Y69) is a Tyrosine amide.

The protein belongs to the conotoxin M superfamily. In terms of tissue distribution, expressed by the venom duct.

The protein localises to the secreted. In Conus textile (Cloth-of-gold cone), this protein is Conotoxin TxMMSK-02.